Here is a 314-residue protein sequence, read N- to C-terminus: Putative methylthioribose-1-phosphate isomerase (314 aa).

Residues 45–47 (RGA), Arg-79, and Gln-177 contribute to the substrate site. The active-site Proton donor is the Asp-218. 227 to 228 (NK) contacts substrate.

The protein belongs to the eIF-2B alpha/beta/delta subunits family. MtnA subfamily.

The catalysed reaction is 5-(methylsulfanyl)-alpha-D-ribose 1-phosphate = 5-(methylsulfanyl)-D-ribulose 1-phosphate. Its function is as follows. Catalyzes the interconversion of methylthioribose-1-phosphate (MTR-1-P) into methylthioribulose-1-phosphate (MTRu-1-P). This chain is Putative methylthioribose-1-phosphate isomerase, found in Methanosphaera stadtmanae (strain ATCC 43021 / DSM 3091 / JCM 11832 / MCB-3).